The primary structure comprises 86 residues: MSDQRRKSAGRRKYTPRRKVCVFTAEGIVPDYKDIKRLQRMVSDRGKILPRRRTGTCAKYQRKLNVAIKRARHLALLPFVSENTRG.

This sequence belongs to the bacterial ribosomal protein bS18 family. As to quaternary structure, part of the 30S ribosomal subunit. Forms a tight heterodimer with protein bS6.

Its function is as follows. Binds as a heterodimer with protein bS6 to the central domain of the 16S rRNA, where it helps stabilize the platform of the 30S subunit. In Herpetosiphon aurantiacus (strain ATCC 23779 / DSM 785 / 114-95), this protein is Small ribosomal subunit protein bS18.